A 359-amino-acid polypeptide reads, in one-letter code: 3-dehydroquinate synthase (359 aa).

NAD(+)-binding positions include 71-76 (DGEAYK), 105-109 (GVVGD), 129-130 (TT), K142, and K151. Zn(2+) contacts are provided by E184, H247, and H264.

Belongs to the sugar phosphate cyclases superfamily. Dehydroquinate synthase family. Requires Co(2+) as cofactor. It depends on Zn(2+) as a cofactor. The cofactor is NAD(+).

It is found in the cytoplasm. The catalysed reaction is 7-phospho-2-dehydro-3-deoxy-D-arabino-heptonate = 3-dehydroquinate + phosphate. It functions in the pathway metabolic intermediate biosynthesis; chorismate biosynthesis; chorismate from D-erythrose 4-phosphate and phosphoenolpyruvate: step 2/7. Its function is as follows. Catalyzes the conversion of 3-deoxy-D-arabino-heptulosonate 7-phosphate (DAHP) to dehydroquinate (DHQ). This Burkholderia cenocepacia (strain ATCC BAA-245 / DSM 16553 / LMG 16656 / NCTC 13227 / J2315 / CF5610) (Burkholderia cepacia (strain J2315)) protein is 3-dehydroquinate synthase.